The sequence spans 134 residues: Small ribosomal subunit protein uS11 (134 aa).

This sequence belongs to the universal ribosomal protein uS11 family. As to quaternary structure, part of the 30S ribosomal subunit. Interacts with proteins S7 and S18. Binds to IF-3.

Located on the platform of the 30S subunit, it bridges several disparate RNA helices of the 16S rRNA. Forms part of the Shine-Dalgarno cleft in the 70S ribosome. This is Small ribosomal subunit protein uS11 from Janthinobacterium sp. (strain Marseille) (Minibacterium massiliensis).